The following is a 344-amino-acid chain: Arginine N-succinyltransferase (344 aa).

A succinyl-CoA-binding site is contributed by L125. H229 acts as the Proton donor in catalysis.

Belongs to the arginine N-succinyltransferase family.

It carries out the reaction succinyl-CoA + L-arginine = N(2)-succinyl-L-arginine + CoA + H(+). It participates in amino-acid degradation; L-arginine degradation via AST pathway; L-glutamate and succinate from L-arginine: step 1/5. Catalyzes the transfer of succinyl-CoA to arginine to produce N(2)-succinylarginine. The protein is Arginine N-succinyltransferase of Shigella sonnei (strain Ss046).